The chain runs to 226 residues: Enolase-phosphatase E1 (226 aa).

This sequence belongs to the HAD-like hydrolase superfamily. MasA/MtnC family. Monomer. Requires Mg(2+) as cofactor.

The enzyme catalyses 5-methylsulfanyl-2,3-dioxopentyl phosphate + H2O = 1,2-dihydroxy-5-(methylsulfanyl)pent-1-en-3-one + phosphate. The protein operates within amino-acid biosynthesis; L-methionine biosynthesis via salvage pathway; L-methionine from S-methyl-5-thio-alpha-D-ribose 1-phosphate: step 3/6. It functions in the pathway amino-acid biosynthesis; L-methionine biosynthesis via salvage pathway; L-methionine from S-methyl-5-thio-alpha-D-ribose 1-phosphate: step 4/6. Bifunctional enzyme that catalyzes the enolization of 2,3-diketo-5-methylthiopentyl-1-phosphate (DK-MTP-1-P) into the intermediate 2-hydroxy-3-keto-5-methylthiopentenyl-1-phosphate (HK-MTPenyl-1-P), which is then dephosphorylated to form the acireductone 1,2-dihydroxy-3-keto-5-methylthiopentene (DHK-MTPene). This chain is Enolase-phosphatase E1, found in Shewanella amazonensis (strain ATCC BAA-1098 / SB2B).